Consider the following 359-residue polypeptide: Histidinol-phosphate aminotransferase (359 aa).

Lys-217 carries the post-translational modification N6-(pyridoxal phosphate)lysine.

It belongs to the class-II pyridoxal-phosphate-dependent aminotransferase family. Histidinol-phosphate aminotransferase subfamily. Homodimer. It depends on pyridoxal 5'-phosphate as a cofactor.

It catalyses the reaction L-histidinol phosphate + 2-oxoglutarate = 3-(imidazol-4-yl)-2-oxopropyl phosphate + L-glutamate. It functions in the pathway amino-acid biosynthesis; L-histidine biosynthesis; L-histidine from 5-phospho-alpha-D-ribose 1-diphosphate: step 7/9. This Salmonella paratyphi A (strain ATCC 9150 / SARB42) protein is Histidinol-phosphate aminotransferase.